A 296-amino-acid polypeptide reads, in one-letter code: Elongation factor Ts (296 aa).

The segment at 82-85 (TDFV) is involved in Mg(2+) ion dislocation from EF-Tu.

The protein belongs to the EF-Ts family.

The protein resides in the cytoplasm. In terms of biological role, associates with the EF-Tu.GDP complex and induces the exchange of GDP to GTP. It remains bound to the aminoacyl-tRNA.EF-Tu.GTP complex up to the GTP hydrolysis stage on the ribosome. This is Elongation factor Ts from Coxiella burnetii (strain CbuK_Q154) (Coxiella burnetii (strain Q154)).